A 131-amino-acid chain; its full sequence is Sec-independent protein translocase protein TatB (131 aa).

The chain crosses the membrane as a helical span at residues 2–22 (FANIGWWEMLVLVMVGLVVLG). The segment at 90–131 (DSLFTGDFDRPTPKKPDAAGSAGPDATEQIGAGPIPFDSDAT) is disordered. Positions 96–106 (DFDRPTPKKPD) are enriched in basic and acidic residues.

The protein belongs to the TatB family. In terms of assembly, the Tat system comprises two distinct complexes: a TatABC complex, containing multiple copies of TatA, TatB and TatC subunits, and a separate TatA complex, containing only TatA subunits. Substrates initially bind to the TatABC complex, which probably triggers association of the separate TatA complex to form the active translocon.

It localises to the cell membrane. Functionally, part of the twin-arginine translocation (Tat) system that transports large folded proteins containing a characteristic twin-arginine motif in their signal peptide across membranes. Together with TatC, TatB is part of a receptor directly interacting with Tat signal peptides. TatB may form an oligomeric binding site that transiently accommodates folded Tat precursor proteins before their translocation. The polypeptide is Sec-independent protein translocase protein TatB (Mycobacterium tuberculosis (strain ATCC 25177 / H37Ra)).